Here is a 212-residue protein sequence, read N- to C-terminus: Inactive ribonuclease-like protein 10 (212 aa).

A signal peptide spans 1 to 24 (MKVTLVHLLFMMLLLLLGLGVGLG). 2 N-linked (GlcNAc...) asparagine glycosylation sites follow: asparagine 129 and asparagine 204.

Belongs to the pancreatic ribonuclease family. The N-terminus is blocked. Glycosylated. In terms of tissue distribution, male-specific expression in proximal caput of the epididymis.

Its subcellular location is the secreted. In terms of biological role, secreted proximal epididymal protein required for post-testicular sperm maturation and male fertility. May be involved in sperm adhesion to the egg zona pellucida. Does not have ribonuclease activity. In Rattus norvegicus (Rat), this protein is Inactive ribonuclease-like protein 10 (Rnase10).